The primary structure comprises 810 residues: DNA gyrase subunit A (810 aa).

Residues L36–L502 enclose the Topo IIA-type catalytic domain. Y124 serves as the catalytic O-(5'-phospho-DNA)-tyrosine intermediate. The GyrA-box motif lies at Q529 to G535.

Belongs to the type II topoisomerase GyrA/ParC subunit family. In terms of assembly, heterotetramer, composed of two GyrA and two GyrB chains. In the heterotetramer, GyrA contains the active site tyrosine that forms a transient covalent intermediate with DNA, while GyrB binds cofactors and catalyzes ATP hydrolysis.

Its subcellular location is the cytoplasm. The enzyme catalyses ATP-dependent breakage, passage and rejoining of double-stranded DNA.. Its function is as follows. A type II topoisomerase that negatively supercoils closed circular double-stranded (ds) DNA in an ATP-dependent manner to modulate DNA topology and maintain chromosomes in an underwound state. Negative supercoiling favors strand separation, and DNA replication, transcription, recombination and repair, all of which involve strand separation. Also able to catalyze the interconversion of other topological isomers of dsDNA rings, including catenanes and knotted rings. Type II topoisomerases break and join 2 DNA strands simultaneously in an ATP-dependent manner. This is DNA gyrase subunit A from Borrelia hermsii (strain HS1 / DAH).